A 111-amino-acid polypeptide reads, in one-letter code: WAP four-disulfide core domain protein 12 (111 aa).

The first 23 residues, 1–23 (MGSSSFLVLMVSLVLVTLVAVEG), serve as a signal peptide directing secretion. Residues 27-74 (GIEKAGVCPADNVRCFKSDPPQCHTDQDCLGERKCCYLHCGFKCVIPV) form the WAP domain. Cystine bridges form between Cys-34/Cys-62, Cys-41/Cys-66, Cys-49/Cys-61, and Cys-55/Cys-70. A disordered region spans residues 80–111 (GGNKDEDVSRPYPEPGWEAKCPGSSSTRCPQK). The span at 102–111 (GSSSTRCPQK) shows a compositional bias: polar residues.

In terms of tissue distribution, highly expressed in prostate, skin, lung and esophagus. Weakly expressed in skeletal muscle, epididymis, kidney, trachea, salivary gland, testis and seminal vesicle.

It is found in the secreted. In terms of biological role, antibacterial protein. Putative acid-stable proteinase inhibitor. This is WAP four-disulfide core domain protein 12 (WFDC12) from Homo sapiens (Human).